A 366-amino-acid polypeptide reads, in one-letter code: Lipase member J (366 aa).

The active-site Nucleophile is S141. Catalysis depends on charge relay system residues D312 and H341.

Belongs to the AB hydrolase superfamily. Lipase family.

In Homo sapiens (Human), this protein is Lipase member J (LIPJ).